Consider the following 419-residue polypeptide: UPF0229 protein TERTU_3150 (419 aa).

Residues 63–111 (IFHHGSGGKNNRVLPGNDRFNGGDHIERPEQGQGGGGNGSGASDSGEGE) form a disordered region. Over residues 83–92 (NGGDHIERPE) the composition is skewed to basic and acidic residues.

It belongs to the UPF0229 family.

This is UPF0229 protein TERTU_3150 from Teredinibacter turnerae (strain ATCC 39867 / T7901).